Consider the following 223-residue polypeptide: uncharacterized protein (223 aa).

The segment at 33-67 (CPICGGKGTLKAIQFIHRIPYFGEVMESTVVCERC) adopts a C4-type zinc-finger fold.

This sequence belongs to the ZPR1 family.

This is an uncharacterized protein from Pyrococcus horikoshii (strain ATCC 700860 / DSM 12428 / JCM 9974 / NBRC 100139 / OT-3).